The following is a 375-amino-acid chain: Transaldolase (375 aa).

Lys145 serves as the catalytic Schiff-base intermediate with substrate.

It belongs to the transaldolase family. Type 2 subfamily.

It is found in the cytoplasm. It carries out the reaction D-sedoheptulose 7-phosphate + D-glyceraldehyde 3-phosphate = D-erythrose 4-phosphate + beta-D-fructose 6-phosphate. The protein operates within carbohydrate degradation; pentose phosphate pathway; D-glyceraldehyde 3-phosphate and beta-D-fructose 6-phosphate from D-ribose 5-phosphate and D-xylulose 5-phosphate (non-oxidative stage): step 2/3. In terms of biological role, transaldolase is important for the balance of metabolites in the pentose-phosphate pathway. The polypeptide is Transaldolase (Mycobacterium leprae (strain Br4923)).